Reading from the N-terminus, the 299-residue chain is Bifunctional phosphoglucose/phosphomannose isomerase (299 aa).

The SIS domain maps to 27–177 (DEVEITPSSR…IHKLMEDFQK (151 aa)). D-fructose 6-phosphate is bound by residues G44, S45, S84, S86, T89, and R132. E200 functions as the Proton acceptor in the catalytic mechanism. D-fructose 6-phosphate is bound by residues H216 and K295. The active-site Proton donor is H216. K295 acts as the Proton acceptor in catalysis.

It belongs to the PGI/PMI family. Homodimer.

It carries out the reaction alpha-D-glucose 6-phosphate = beta-D-fructose 6-phosphate. The enzyme catalyses D-mannose 6-phosphate = D-fructose 6-phosphate. Presence or absence of metal ions or EDTA does not significantly affect the phosphoglucose isomerase activity. Functionally, dual specificity isomerase that catalyzes the isomerization of both glucose-6-phosphate and mannose-6-phosphate to fructose-6-phosphate with nearly similar catalytic efficiency. Also catalyzes the epimerization of mannose 6-phosphate to glucose 6-phosphate but the rate of epimerization reaction is 20-fold lower than that of isomerization reaction. The protein is Bifunctional phosphoglucose/phosphomannose isomerase of Pyrobaculum calidifontis (strain DSM 21063 / JCM 11548 / VA1).